The following is a 511-amino-acid chain: MAYATGITFASRSILPICSRTFLSPLRVASLLVFPEKSSATFFRRVQVPHLFSTSTTTLFSSVKCSIHSTSSPETENQAVFRPNVVDILEERGLLESITSENLRSACSDPKVAPLRVYCGFDPTAESLHLGNLLGIIVLSWFQRCGHQAVGLIGGATGRVGDPSGKSLERPELDADTLEKNIAGITKIIIKILGSNPSPGGSYVIFNNYDWWKDMTMLDFLNKVGRFARVGTMMAKESVKKRLESEQGMSYTEFTYQLLQAYDFLHLFKNEGINVQIGGSDQWGNITAGTDLIRKILQAEEAAYGLTFPLLLKNDGTKFGKSEDGAIWLSPSMLSPYKFYQYFFSVPDVDVIRFLKTLTFLSLDEIKILEDQMSKPGYVPNTAQIKLAEEVTRFVHGEEGLKEAIKATEALRPGAETKLDWNLIERIAEDIPSCSLPIDRVSGLSIVDLSVSAGLFESKSAARRMLKQGGFYMNNERVDDENKRVDEEDIVEGRGLVLSAGKKNKVVVRIS.

Position 118 (tyrosine 118) interacts with L-tyrosine. Residue aspartate 122 coordinates ATP. A 'HIGH' region motif is present at residues 123-132 (PTAESLHLGN). Residues aspartate 162, tyrosine 256, glutamine 260, aspartate 263, and glutamine 282 each coordinate L-tyrosine. Positions 318-322 (KFGKS) match the 'KMSKS' region motif. Lysine 321 is a binding site for ATP. The S4 RNA-binding domain occupies 444–510 (LSIVDLSVSA…GKKNKVVVRI (67 aa)).

Belongs to the class-I aminoacyl-tRNA synthetase family.

The protein localises to the plastid. The protein resides in the chloroplast. Its subcellular location is the mitochondrion. The enzyme catalyses tRNA(Tyr) + L-tyrosine + ATP = L-tyrosyl-tRNA(Tyr) + AMP + diphosphate + H(+). Its function is as follows. Catalyzes the attachment of tyrosine to tRNA(Tyr) in a two-step reaction: tyrosine is first activated by ATP to form Tyr-AMP and then transferred to the acceptor end of tRNA(Tyr). In Arabidopsis thaliana (Mouse-ear cress), this protein is Tyrosine--tRNA ligase, chloroplastic/mitochondrial.